A 100-amino-acid polypeptide reads, in one-letter code: MAKKSMIERDKKRARMVAKYAAKRAALKEAFNNAADPLEKLEIHRKIQNLPRNSSPTRMRNRCQITGRPRSYYRDFGLCRNVLRDWAHQGLLPGVVKSSW.

This sequence belongs to the universal ribosomal protein uS14 family. As to quaternary structure, part of the 30S ribosomal subunit. Contacts proteins S3 and S10.

Its function is as follows. Binds 16S rRNA, required for the assembly of 30S particles and may also be responsible for determining the conformation of the 16S rRNA at the A site. The protein is Small ribosomal subunit protein uS14 of Picosynechococcus sp. (strain ATCC 27264 / PCC 7002 / PR-6) (Agmenellum quadruplicatum).